Consider the following 514-residue polypeptide: Histidine ammonia-lyase (514 aa).

Residues 142-144 (ASG) constitute a cross-link (5-imidazolinone (Ala-Gly)). Ser143 is subject to 2,3-didehydroalanine (Ser).

It belongs to the PAL/histidase family. Post-translationally, contains an active site 4-methylidene-imidazol-5-one (MIO), which is formed autocatalytically by cyclization and dehydration of residues Ala-Ser-Gly.

The protein resides in the cytoplasm. The enzyme catalyses L-histidine = trans-urocanate + NH4(+). It functions in the pathway amino-acid degradation; L-histidine degradation into L-glutamate; N-formimidoyl-L-glutamate from L-histidine: step 1/3. The sequence is that of Histidine ammonia-lyase from Sorangium cellulosum (strain So ce56) (Polyangium cellulosum (strain So ce56)).